Consider the following 510-residue polypeptide: 2,3-bisphosphoglycerate-independent phosphoglycerate mutase (510 aa).

Mn(2+) contacts are provided by Asp12 and Ser62. Residue Ser62 is the Phosphoserine intermediate of the active site. Substrate contacts are provided by residues His123, 152 to 153, Arg184, Arg190, 257 to 260, and Lys331; these read RD and RADR. The Mn(2+) site is built by Asp399, His403, Asp440, His441, and His458.

This sequence belongs to the BPG-independent phosphoglycerate mutase family. In terms of assembly, monomer. The cofactor is Mn(2+).

The enzyme catalyses (2R)-2-phosphoglycerate = (2R)-3-phosphoglycerate. It participates in carbohydrate degradation; glycolysis; pyruvate from D-glyceraldehyde 3-phosphate: step 3/5. Its function is as follows. Catalyzes the interconversion of 2-phosphoglycerate and 3-phosphoglycerate. This is 2,3-bisphosphoglycerate-independent phosphoglycerate mutase from Lawsonia intracellularis (strain PHE/MN1-00).